The following is a 341-amino-acid chain: tRNA N6-adenosine threonylcarbamoyltransferase (341 aa).

Positions 111 and 115 each coordinate Fe cation. Substrate contacts are provided by residues 134–138, D167, G180, and N276; that span reads LVSGG. Fe cation is bound at residue D304.

It belongs to the KAE1 / TsaD family. Requires Fe(2+) as cofactor.

The protein resides in the cytoplasm. The enzyme catalyses L-threonylcarbamoyladenylate + adenosine(37) in tRNA = N(6)-L-threonylcarbamoyladenosine(37) in tRNA + AMP + H(+). In terms of biological role, required for the formation of a threonylcarbamoyl group on adenosine at position 37 (t(6)A37) in tRNAs that read codons beginning with adenine. Is involved in the transfer of the threonylcarbamoyl moiety of threonylcarbamoyl-AMP (TC-AMP) to the N6 group of A37, together with TsaE and TsaB. TsaD likely plays a direct catalytic role in this reaction. This is tRNA N6-adenosine threonylcarbamoyltransferase from Pseudomonas fluorescens (strain Pf0-1).